Here is a 1029-residue protein sequence, read N- to C-terminus: U2 snRNP-associated SURP motif-containing protein (1029 aa).

2 disordered regions span residues 1–111 and 141–274; these read MADK…EDEK and VNAA…PSTT. Ala2 bears the N-acetylalanine mark. Polar residues predominate over residues 7–16; that stretch reads GGSQKASSKT. The span at 45 to 54 shows a compositional bias: basic residues; it reads TRPKSPRKHN. Basic and acidic residues predominate over residues 55–64; the sequence is YRNESARESL. The residue at position 67 (Ser67) is a Phosphoserine. Lys80 participates in a covalent cross-link: Glycyl lysine isopeptide (Lys-Gly) (interchain with G-Cter in SUMO2). Residues 92–121 adopt a coiled-coil conformation; the sequence is AKRTLSKKEQEELKKKEDEKAAAEIYEEFL. Composition is skewed to basic and acidic residues over residues 97–111 and 144–155; these read SKKE…EDEK and AKEEHETDEKRG. Glycyl lysine isopeptide (Lys-Gly) (interchain with G-Cter in SUMO2) cross-links involve residues Lys145 and Lys168. Positions 169-178 are enriched in polar residues; sequence NPPNQSSNER. Residues 186 to 222 are compositionally biased toward basic and acidic residues; that stretch reads ETKKPPLKKGEKEKKKSNLELFKEELKQIQEERDERH. Residues 192–232 are a coiled coil; the sequence is LKKGEKEKKKSNLELFKEELKQIQEERDERHKTKGRLSRFE. Residue Ser202 is modified to Phosphoserine. Residue Lys208 forms a Glycyl lysine isopeptide (Lys-Gly) (interchain with G-Cter in SUMO2) linkage. Ser236 is subject to Phosphoserine. Positions 239–249 are enriched in basic and acidic residues; sequence DGQRRSMDAPS. Residues 274–355 enclose the RRM domain; that stretch reads TNLYLGNINP…FEMKLGWGKA (82 aa). Residues 430–473 form an SURP motif repeat; it reads LIHRMIEFVVREGPMFEAMIMNREINNPMFRFLFENQTPAHVYY. Phosphoserine is present on Ser485. In terms of domain architecture, CID spans 534-679; it reads LKEEQRDKLE…KLQNIFLGLV (146 aa). Thr719 carries the post-translational modification Phosphothreonine. Glycyl lysine isopeptide (Lys-Gly) (interchain with G-Cter in SUMO2) cross-links involve residues Lys748 and Lys749. Lys760 carries the N6-acetyllysine; alternate modification. Lys760 is covalently cross-linked (Glycyl lysine isopeptide (Lys-Gly) (interchain with G-Cter in SUMO2); alternate). Disordered stretches follow at residues 778–841 and 855–1029; these read KWEL…EEKR and QDEL…KNKH. Residues 786–806 are compositionally biased toward acidic residues; sequence EESEEEENQNQEEESEDEEDT. 3 positions are modified to phosphoserine: Ser788, Ser800, and Ser811. 2 stretches are compositionally biased toward basic and acidic residues: residues 810-841 and 874-922; these read KSEE…EEKR and QVEH…TPTR. Glycyl lysine isopeptide (Lys-Gly) (interchain with G-Cter in SUMO2) cross-links involve residues Lys822, Lys829, and Lys832. Positions 837 to 915 form a coiled coil; it reads SEEKRAKLRE…ESRSKDKKEK (79 aa). The residue at position 931 (Thr931) is a Phosphothreonine. Phosphoserine is present on residues Ser946 and Ser948. Over residues 950-980 the composition is skewed to basic and acidic residues; sequence KSERSERSERSHKESSRSRSSHKDSPRDVSK. The span at 991 to 1029 shows a compositional bias: basic residues; the sequence is TPKRSRRSRSRSPKKSGKKSRSQSRSPHRSHKKSKKNKH.

It belongs to the splicing factor SR family. In terms of assembly, interacts with ERBB4.

Its subcellular location is the nucleus. The polypeptide is U2 snRNP-associated SURP motif-containing protein (U2SURP) (Homo sapiens (Human)).